The sequence spans 509 residues: Putative ATP-dependent RNA helicase QP509L (509 aa).

A Helicase ATP-binding domain is found at 110-262; it reads KKLLSPYGRF…KIIIHHLGQP (153 aa). Position 123-130 (123-130) interacts with ATP; sequence LNTGLGKT. Residues 215 to 218 carry the DEAH box motif; that stretch reads DEAH.

This sequence belongs to the DEAD box helicase family. DEAH subfamily.

The catalysed reaction is ATP + H2O = ADP + phosphate + H(+). This is Putative ATP-dependent RNA helicase QP509L from African swine fever virus (strain Badajoz 1971 Vero-adapted) (Ba71V).